The following is a 513-amino-acid chain: Putative thymidine phosphorylase (513 aa).

The protein belongs to the thymidine/pyrimidine-nucleoside phosphorylase family. Type 2 subfamily.

It carries out the reaction thymidine + phosphate = 2-deoxy-alpha-D-ribose 1-phosphate + thymine. This is Putative thymidine phosphorylase from Rhodopseudomonas palustris (strain BisB18).